An 808-amino-acid chain; its full sequence is Phenylalanine--tRNA ligase beta subunit (808 aa).

The tRNA-binding domain occupies 40-155 (NQGATGVVVG…DDVEIGSDAL (116 aa)). Residues 409 to 484 (IEEPVVSLNL…RLYGYDNIPT (76 aa)) form the B5 domain. Mg(2+) is bound by residues aspartate 462, aspartate 468, glutamate 471, and glutamate 472. The FDX-ACB domain maps to 714-807 (PRFPAISRDI…LEASTGAVLR (94 aa)).

This sequence belongs to the phenylalanyl-tRNA synthetase beta subunit family. Type 1 subfamily. As to quaternary structure, tetramer of two alpha and two beta subunits. Mg(2+) serves as cofactor.

It is found in the cytoplasm. It carries out the reaction tRNA(Phe) + L-phenylalanine + ATP = L-phenylalanyl-tRNA(Phe) + AMP + diphosphate + H(+). The polypeptide is Phenylalanine--tRNA ligase beta subunit (pheT) (Halalkalibacterium halodurans (strain ATCC BAA-125 / DSM 18197 / FERM 7344 / JCM 9153 / C-125) (Bacillus halodurans)).